The sequence spans 555 residues: Phosphoglucomutase (555 aa).

Alpha-D-glucose 1,6-bisphosphate contacts are provided by R22 and S114. S114 serves as the catalytic Phosphoserine intermediate. S114, D279, D281, and D283 together coordinate Mg(2+). S114 carries the post-translational modification Phosphoserine. D283, R284, T347, E366, S368, and K379 together coordinate alpha-D-glucose 1,6-bisphosphate.

It belongs to the phosphohexose mutase family. In terms of assembly, monomer. Mg(2+) serves as cofactor.

It localises to the cytoplasm. It catalyses the reaction alpha-D-glucose 1-phosphate = alpha-D-glucose 6-phosphate. It carries out the reaction O-phospho-L-seryl-[protein] + alpha-D-glucose 1-phosphate = alpha-D-glucose 1,6-bisphosphate + L-seryl-[protein]. The catalysed reaction is alpha-D-glucose 1,6-bisphosphate + L-seryl-[protein] = O-phospho-L-seryl-[protein] + alpha-D-glucose 6-phosphate. Catalyzes the reversible isomerization of alpha-D-glucose 1-phosphate to alpha-D-glucose 6-phosphate. The mechanism proceeds via the intermediate compound alpha-D-glucose 1,6-bisphosphate. Key enzyme in hexose metabolism. The reverse reaction is an essential step for biosynthesis because glucose 1-phosphate is the starting point for the synthesis of UDP-glucose, which acts as a precursor for the synthesis of oligosaccharides and trehalose. This Aspergillus oryzae (strain ATCC 42149 / RIB 40) (Yellow koji mold) protein is Phosphoglucomutase (pgmA).